The primary structure comprises 354 residues: Dihydroorotate dehydrogenase (quinone) (354 aa).

FMN-binding positions include 70 to 74 and Thr-94; that span reads AGFDK. Lys-74 contacts substrate. A substrate-binding site is contributed by 119 to 123; sequence NAMGF. Residues Asn-148 and Asn-181 each contribute to the FMN site. Asn-181 lines the substrate pocket. Ser-184 (nucleophile) is an active-site residue. Substrate is bound at residue Asn-186. Lys-217 and Thr-245 together coordinate FMN. 246-247 is a binding site for substrate; sequence NT. Residues Gly-265, Gly-294, and 315–316 each bind FMN; that span reads YS.

This sequence belongs to the dihydroorotate dehydrogenase family. Type 2 subfamily. As to quaternary structure, monomer. FMN serves as cofactor.

Its subcellular location is the cell membrane. The catalysed reaction is (S)-dihydroorotate + a quinone = orotate + a quinol. Its pathway is pyrimidine metabolism; UMP biosynthesis via de novo pathway; orotate from (S)-dihydroorotate (quinone route): step 1/1. Functionally, catalyzes the conversion of dihydroorotate to orotate with quinone as electron acceptor. This chain is Dihydroorotate dehydrogenase (quinone), found in Sulfurovum sp. (strain NBC37-1).